Here is a 142-residue protein sequence, read N- to C-terminus: Small ribosomal subunit protein uS12 (142 aa).

The tract at residues 1 to 44 (MTNGKYAARKLKKDRQQRRWSDSEYARRERGLGKKSDPLEGAPQ) is disordered. Over residues 7–16 (AARKLKKDRQ) the composition is skewed to basic residues. Over residues 17 to 38 (QRRWSDSEYARRERGLGKKSDP) the composition is skewed to basic and acidic residues.

The protein belongs to the universal ribosomal protein uS12 family. In terms of assembly, part of the 30S ribosomal subunit.

With S4 and S5 plays an important role in translational accuracy. Located at the interface of the 30S and 50S subunits. The chain is Small ribosomal subunit protein uS12 from Halobacterium salinarum (strain ATCC 29341 / DSM 671 / R1).